The chain runs to 1449 residues: VWFA and cache domain-containing protein CG16868 (1449 aa).

Positions 1–23 (MWPNSNLNAVLLILAVLACPTSS) are cleaved as a signal peptide. Topologically, residues 24 to 1220 (QHVPLAMANS…NPQREQHAYS (1197 aa)) are extracellular. Asn-32, Asn-112, Asn-153, Asn-407, Asn-447, and Asn-497 each carry an N-linked (GlcNAc...) asparagine glycan. In terms of domain architecture, VWFA spans 320–541 (FVLFLIDVGS…TSLPQTSSRI (222 aa)). In terms of domain architecture, Cache 1 spans 557–639 (VHPPVVDADS…PRPLIQRETS (83 aa)). N-linked (GlcNAc...) asparagine glycosylation is found at Asn-649, Asn-668, and Asn-707. Residues 889–934 (TAPYLDAGGAGYIITIAHTIFEGKAHALHSAQQDRPVAVVALDVPY) form the Cache 2 domain. N-linked (GlcNAc...) asparagine glycosylation is found at Asn-1015, Asn-1025, Asn-1059, and Asn-1111. A helical transmembrane segment spans residues 1221 to 1241 (AFGPLGGAIVVLVMVIGFAIY). Over 1242–1449 (CYRHNLDAQT…VHRHMETAES (208 aa)) the chain is Cytoplasmic. Disordered stretches follow at residues 1307–1339 (YHVS…SSDQ) and 1352–1416 (DKRH…GGSV). Residues 1359 to 1369 (DTMSISTSISS) are compositionally biased toward low complexity. Residues 1370–1392 (PTNRQQSSSQPNTHPYLSNQPTS) are compositionally biased toward polar residues.

The protein belongs to the calcium channel subunit alpha-2/delta family.

The protein localises to the membrane. The protein is VWFA and cache domain-containing protein CG16868 of Drosophila melanogaster (Fruit fly).